The chain runs to 263 residues: Purine nucleoside phosphorylase SE_0862 (263 aa).

His79, Cys124, and His141 together coordinate Zn(2+).

This sequence belongs to the purine nucleoside phosphorylase YfiH/LACC1 family. In terms of assembly, homodimer. It depends on Cu(2+) as a cofactor. Zn(2+) is required as a cofactor.

The catalysed reaction is adenosine + phosphate = alpha-D-ribose 1-phosphate + adenine. It carries out the reaction S-methyl-5'-thioadenosine + phosphate = 5-(methylsulfanyl)-alpha-D-ribose 1-phosphate + adenine. The enzyme catalyses inosine + phosphate = alpha-D-ribose 1-phosphate + hypoxanthine. It catalyses the reaction adenosine + H2O + H(+) = inosine + NH4(+). Functionally, purine nucleoside enzyme that catalyzes the phosphorolysis of adenosine and inosine nucleosides, yielding D-ribose 1-phosphate and the respective free bases, adenine and hypoxanthine. Also catalyzes the phosphorolysis of S-methyl-5'-thioadenosine into adenine and S-methyl-5-thio-alpha-D-ribose 1-phosphate. Also has adenosine deaminase activity. This is Purine nucleoside phosphorylase SE_0862 from Staphylococcus epidermidis (strain ATCC 12228 / FDA PCI 1200).